Reading from the N-terminus, the 281-residue chain is Fructose-bisphosphate aldolase class 1 (281 aa).

Residue lysine 191 is the Schiff-base intermediate with dihydroxyacetone-P of the active site.

Belongs to the DeoC/FbaB aldolase family. As to quaternary structure, homooctamer.

The protein resides in the cytoplasm. It is found in the chromosome. The catalysed reaction is beta-D-fructose 1,6-bisphosphate = D-glyceraldehyde 3-phosphate + dihydroxyacetone phosphate. With respect to regulation, activated by citrate. This is Fructose-bisphosphate aldolase class 1 (fba) from Thermococcus kodakarensis (strain ATCC BAA-918 / JCM 12380 / KOD1) (Pyrococcus kodakaraensis (strain KOD1)).